Consider the following 499-residue polypeptide: Bifunctional purine biosynthesis protein PurH (499 aa).

Residues 1–144 (MINRALISVY…KNFKDVIVVT (144 aa)) enclose the MGS-like domain.

This sequence belongs to the PurH family.

The enzyme catalyses (6R)-10-formyltetrahydrofolate + 5-amino-1-(5-phospho-beta-D-ribosyl)imidazole-4-carboxamide = 5-formamido-1-(5-phospho-D-ribosyl)imidazole-4-carboxamide + (6S)-5,6,7,8-tetrahydrofolate. It carries out the reaction IMP + H2O = 5-formamido-1-(5-phospho-D-ribosyl)imidazole-4-carboxamide. Its pathway is purine metabolism; IMP biosynthesis via de novo pathway; 5-formamido-1-(5-phospho-D-ribosyl)imidazole-4-carboxamide from 5-amino-1-(5-phospho-D-ribosyl)imidazole-4-carboxamide (10-formyl THF route): step 1/1. The protein operates within purine metabolism; IMP biosynthesis via de novo pathway; IMP from 5-formamido-1-(5-phospho-D-ribosyl)imidazole-4-carboxamide: step 1/1. This chain is Bifunctional purine biosynthesis protein PurH, found in Clostridium kluyveri (strain NBRC 12016).